A 500-amino-acid polypeptide reads, in one-letter code: NAD(P)H-quinone oxidoreductase chain 4, chloroplastic (500 aa).

A run of 12 helical transmembrane segments spans residues 4 to 24 (FPWL…ILFI), 37 to 57 (ICIC…NFQL), 80 to 100 (LGID…TTLA), 134 to 154 (LLLF…LLSM), 167 to 187 (FILY…GMGL), 208 to 228 (GLEI…PPII), 242 to 262 (HYST…YGLV), 272 to 292 (AHSL…IYAA), 330 to 350 (GAIL…FLAG), 386 to 406 (LASP…GIIT), 416 to 436 (ILIT…LLSM), and 462 to 482 (IFIL…PDFV).

The protein belongs to the complex I subunit 4 family.

It localises to the plastid. The protein localises to the chloroplast thylakoid membrane. The enzyme catalyses a plastoquinone + NADH + (n+1) H(+)(in) = a plastoquinol + NAD(+) + n H(+)(out). The catalysed reaction is a plastoquinone + NADPH + (n+1) H(+)(in) = a plastoquinol + NADP(+) + n H(+)(out). The protein is NAD(P)H-quinone oxidoreductase chain 4, chloroplastic of Amborella trichopoda.